The sequence spans 351 residues: Protein-glutamate methylesterase/protein-glutamine glutaminase 2 (351 aa).

A Response regulatory domain is found at 4-121; it reads KVLVVDDSTL…PQGFNEYQDL (118 aa). Aspartate 55 is subject to 4-aspartylphosphate. The CheB-type methylesterase domain occupies 156-348; it reads RTVNTQLVAI…DKLLQYLASV (193 aa). Residues serine 168, histidine 194, and aspartate 290 contribute to the active site.

It belongs to the CheB family. In terms of processing, phosphorylated by CheA. Phosphorylation of the N-terminal regulatory domain activates the methylesterase activity.

It is found in the cytoplasm. It catalyses the reaction [protein]-L-glutamate 5-O-methyl ester + H2O = L-glutamyl-[protein] + methanol + H(+). It carries out the reaction L-glutaminyl-[protein] + H2O = L-glutamyl-[protein] + NH4(+). In terms of biological role, involved in chemotaxis. Part of a chemotaxis signal transduction system that modulates chemotaxis in response to various stimuli. Catalyzes the demethylation of specific methylglutamate residues introduced into the chemoreceptors (methyl-accepting chemotaxis proteins or MCP) by CheR. Also mediates the irreversible deamidation of specific glutamine residues to glutamic acid. This chain is Protein-glutamate methylesterase/protein-glutamine glutaminase 2, found in Shewanella oneidensis (strain ATCC 700550 / JCM 31522 / CIP 106686 / LMG 19005 / NCIMB 14063 / MR-1).